Reading from the N-terminus, the 609-residue chain is Phosphoenolpyruvate carboxykinase [GTP] (609 aa).

Substrate contacts are provided by residues R81 and 220–222; that span reads YGG. Mn(2+) contacts are provided by K229 and H249. A substrate-binding site is contributed by S271. 272-277 serves as a coordination point for GTP; it reads ACGKTN. C273 is an active-site residue. Mn(2+) is bound at residue D296. Position 387-389 (387-389) interacts with substrate; the sequence is NSR. GTP is bound by residues R389, R420, and 515–518; that span reads FGEN.

It belongs to the phosphoenolpyruvate carboxykinase [GTP] family. As to quaternary structure, monomer. Mn(2+) is required as a cofactor.

It localises to the cytoplasm. The enzyme catalyses oxaloacetate + GTP = phosphoenolpyruvate + GDP + CO2. It participates in carbohydrate biosynthesis; gluconeogenesis. Catalyzes the conversion of oxaloacetate (OAA) to phosphoenolpyruvate (PEP), the rate-limiting step in the metabolic pathway that produces glucose from lactate and other precursors derived from the citric acid cycle. In Mycobacterium leprae (strain Br4923), this protein is Phosphoenolpyruvate carboxykinase [GTP].